Here is a 396-residue protein sequence, read N- to C-terminus: Acetylornithine aminotransferase 2 (396 aa).

Pyridoxal 5'-phosphate-binding positions include G102–A103 and F134. Position 137 (R137) interacts with N(2)-acetyl-L-ornithine. D219–Q222 contributes to the pyridoxal 5'-phosphate binding site. Residue K248 is modified to N6-(pyridoxal phosphate)lysine. Position 276 (T276) interacts with pyridoxal 5'-phosphate.

The protein belongs to the class-III pyridoxal-phosphate-dependent aminotransferase family. ArgD subfamily. As to quaternary structure, homodimer. The cofactor is pyridoxal 5'-phosphate.

The protein resides in the cytoplasm. It carries out the reaction N(2)-acetyl-L-ornithine + 2-oxoglutarate = N-acetyl-L-glutamate 5-semialdehyde + L-glutamate. It functions in the pathway amino-acid biosynthesis; L-arginine biosynthesis; N(2)-acetyl-L-ornithine from L-glutamate: step 4/4. The sequence is that of Acetylornithine aminotransferase 2 from Bordetella pertussis (strain Tohama I / ATCC BAA-589 / NCTC 13251).